Consider the following 595-residue polypeptide: DNA ligase (595 aa).

Residues 32-36 (DEKYD), 81-82 (SL), and E113 each bind NAD(+). The N6-AMP-lysine intermediate role is filled by K115. 4 residues coordinate NAD(+): R136, E178, K296, and K320. The Zn(2+) site is built by C414, C417, C432, and C438.

This sequence belongs to the NAD-dependent DNA ligase family. LigA subfamily. Mg(2+) serves as cofactor. The cofactor is Mn(2+).

It carries out the reaction NAD(+) + (deoxyribonucleotide)n-3'-hydroxyl + 5'-phospho-(deoxyribonucleotide)m = (deoxyribonucleotide)n+m + AMP + beta-nicotinamide D-nucleotide.. In terms of biological role, DNA ligase that catalyzes the formation of phosphodiester linkages between 5'-phosphoryl and 3'-hydroxyl groups in double-stranded DNA using NAD as a coenzyme and as the energy source for the reaction. It is essential for DNA replication and repair of damaged DNA. The sequence is that of DNA ligase from Blochmanniella pennsylvanica (strain BPEN).